The sequence spans 173 residues: Crossover junction endodeoxyribonuclease RuvC (173 aa).

Catalysis depends on residues aspartate 8, glutamate 67, and aspartate 139. Mg(2+) is bound by residues aspartate 8, glutamate 67, and aspartate 139.

Belongs to the RuvC family. As to quaternary structure, homodimer which binds Holliday junction (HJ) DNA. The HJ becomes 2-fold symmetrical on binding to RuvC with unstacked arms; it has a different conformation from HJ DNA in complex with RuvA. In the full resolvosome a probable DNA-RuvA(4)-RuvB(12)-RuvC(2) complex forms which resolves the HJ. Requires Mg(2+) as cofactor.

The protein resides in the cytoplasm. It carries out the reaction Endonucleolytic cleavage at a junction such as a reciprocal single-stranded crossover between two homologous DNA duplexes (Holliday junction).. Its function is as follows. The RuvA-RuvB-RuvC complex processes Holliday junction (HJ) DNA during genetic recombination and DNA repair. Endonuclease that resolves HJ intermediates. Cleaves cruciform DNA by making single-stranded nicks across the HJ at symmetrical positions within the homologous arms, yielding a 5'-phosphate and a 3'-hydroxyl group; requires a central core of homology in the junction. The consensus cleavage sequence is 5'-(A/T)TT(C/G)-3'. Cleavage occurs on the 3'-side of the TT dinucleotide at the point of strand exchange. HJ branch migration catalyzed by RuvA-RuvB allows RuvC to scan DNA until it finds its consensus sequence, where it cleaves and resolves the cruciform DNA. The polypeptide is Crossover junction endodeoxyribonuclease RuvC (Vibrio parahaemolyticus serotype O3:K6 (strain RIMD 2210633)).